A 221-amino-acid polypeptide reads, in one-letter code: Probable septum site-determining protein MinC (221 aa).

This sequence belongs to the MinC family. In terms of assembly, interacts with MinD and FtsZ.

Functionally, cell division inhibitor that blocks the formation of polar Z ring septums. Rapidly oscillates between the poles of the cell to destabilize FtsZ filaments that have formed before they mature into polar Z rings. Prevents FtsZ polymerization. This Shewanella loihica (strain ATCC BAA-1088 / PV-4) protein is Probable septum site-determining protein MinC.